We begin with the raw amino-acid sequence, 426 residues long: Putative 3-oxoacyl-[acyl-carrier-protein] synthase, mitochondrial (426 aa).

A mitochondrion-targeting transit peptide spans 1 to 18; sequence MKRVVITGLGAVTPLGNG. Positions 19–423 constitute a Ketosynthase family 3 (KS3) domain; that stretch reads VKTNWRNLIQ…GTNASLCFKK (405 aa). Residues cysteine 170, histidine 311, and histidine 351 each act as for beta-ketoacyl synthase activity in the active site.

This sequence belongs to the thiolase-like superfamily. Beta-ketoacyl-ACP synthases family.

The protein localises to the mitochondrion. The enzyme catalyses a fatty acyl-[ACP] + malonyl-[ACP] + H(+) = a 3-oxoacyl-[ACP] + holo-[ACP] + CO2. It catalyses the reaction butanoyl-[ACP] + malonyl-[ACP] + H(+) = 3-oxohexanoyl-[ACP] + holo-[ACP] + CO2. The catalysed reaction is hexanoyl-[ACP] + malonyl-[ACP] + H(+) = 3-oxooctanoyl-[ACP] + holo-[ACP] + CO2. It carries out the reaction octanoyl-[ACP] + malonyl-[ACP] + H(+) = 3-oxodecanoyl-[ACP] + holo-[ACP] + CO2. The enzyme catalyses decanoyl-[ACP] + malonyl-[ACP] + H(+) = 3-oxododecanoyl-[ACP] + holo-[ACP] + CO2. It catalyses the reaction dodecanoyl-[ACP] + malonyl-[ACP] + H(+) = 3-oxotetradecanoyl-[ACP] + holo-[ACP] + CO2. The catalysed reaction is tetradecanoyl-[ACP] + malonyl-[ACP] + H(+) = 3-oxohexadecanoyl-[ACP] + holo-[ACP] + CO2. It participates in lipid metabolism; fatty acid biosynthesis. Its function is as follows. May play a role in the biosynthesis of lipoic acid as well as longer chain fatty acids required for optimal mitochondrial function. This is Putative 3-oxoacyl-[acyl-carrier-protein] synthase, mitochondrial from Schizosaccharomyces pombe (strain 972 / ATCC 24843) (Fission yeast).